We begin with the raw amino-acid sequence, 1923 residues long: Endoribonuclease Dicer (1923 aa).

Residues 51–227 enclose the Helicase ATP-binding domain; the sequence is LLEAALDHNT…ELEEKIQKLE (177 aa). 64–71 lines the ATP pocket; sequence LNTGSGKT. Positions 175-178 match the DECH box motif; it reads DECH. Positions 256–595 are required for interaction with PRKRA and TARBP2; the sequence is DCGPFTDRSG…LRNKCSKSVD (340 aa). The tract at residues 410–433 is disordered; the sequence is VSWSDSEDDEEDEEIEEKEKPETN. Phosphoserine is present on residues serine 413 and serine 415. Acidic residues predominate over residues 414 to 425; it reads DSEDDEEDEEIE. One can recognise a Helicase C-terminal domain in the interval 433-602; it reads NFPSPFTNIL…SVDTGEADTE (170 aa). The region spanning 629 to 721 is the Dicer dsRNA-binding fold domain; sequence AIGHVNRYCA…MPVGKETVKY (93 aa). A PAZ domain is found at 894–1041; that stretch reads KFMEDIEKSE…LVPELCAIHP (148 aa). Residues serine 1015 and serine 1160 each carry the phosphoserine modification. Composition is skewed to polar residues over residues 1246–1255 and 1277–1290; these read NANTSTSDGS and SEQS…SRTL. A disordered region spans residues 1246–1291; the sequence is NANTSTSDGSPVTAAVPGTTETGEAPPDRTASEQSPSPGYSSRTLG. The RNase III 1 domain occupies 1276–1404; the sequence is ASEQSPSPGY…TEKWEKDEMT (129 aa). Mg(2+) is bound by residues glutamate 1316, glutamate 1396, and glutamate 1399. 3 positions are modified to phosphoserine: serine 1461, serine 1469, and serine 1471. The 159-residue stretch at 1667–1825 folds into the RNase III 2 domain; it reads FENFEKKINY…LAGAIYMDSG (159 aa). Mg(2+) contacts are provided by glutamate 1706, aspartate 1811, and glutamate 1814. A DRBM domain is found at 1853 to 1915; it reads SPVRELLEME…ARRALRSLKA (63 aa). Serine 1869 is modified (phosphoserine).

It belongs to the helicase family. Dicer subfamily. In terms of assembly, component of the RISC loading complex (RLC), or micro-RNA (miRNA) loading complex (miRLC), which is composed of DICER1, AGO2 and TARBP2; DICER1 and TARBP2 are required to process precursor miRNAs (pre-miRNAs) to mature miRNAs and then load them onto AGO2. Note that the trimeric RLC/miRLC is also referred to as RISC. Interacts with DHX9, AGO1, PIWIL1 and PRKRA. Interacts with AGO2, TARBP2, EIF6, MOV10 and RPL7A (60S ribosome subunit); they form a large RNA-induced silencing complex (RISC). Interacts with BCDIN3D. Interacts (via Dicer dsRNA-binding fold domain) with ALOX5 (via PLAT domain); this interaction enhances arachidonate 5-lipoxygenase activity and modifies the miRNA precursor processing activity of DICER1. Mg(2+) is required as a cofactor. Requires Mn(2+) as cofactor.

The protein localises to the cytoplasm. The catalysed reaction is Endonucleolytic cleavage to 5'-phosphomonoester.. Functionally, double-stranded RNA (dsRNA) endoribonuclease playing a central role in short dsRNA-mediated post-transcriptional gene silencing. Cleaves naturally occurring long dsRNAs and short hairpin pre-microRNAs (miRNA) into fragments of twenty-one to twenty-three nucleotides with 3' overhang of two nucleotides, producing respectively short interfering RNAs (siRNA) and mature microRNAs. SiRNAs and miRNAs serve as guide to direct the RNA-induced silencing complex (RISC) to complementary RNAs to degrade them or prevent their translation. Gene silencing mediated by siRNAs, also called RNA interference, controls the elimination of transcripts from mobile and repetitive DNA elements of the genome but also the degradation of exogenous RNA of viral origin for instance. The miRNA pathway on the other side is a mean to specifically regulate the expression of target genes. The polypeptide is Endoribonuclease Dicer (DICER1) (Bos taurus (Bovine)).